Consider the following 197-residue polypeptide: Imidazoleglycerol-phosphate dehydratase (197 aa).

It belongs to the imidazoleglycerol-phosphate dehydratase family.

Its subcellular location is the cytoplasm. It catalyses the reaction D-erythro-1-(imidazol-4-yl)glycerol 3-phosphate = 3-(imidazol-4-yl)-2-oxopropyl phosphate + H2O. The protein operates within amino-acid biosynthesis; L-histidine biosynthesis; L-histidine from 5-phospho-alpha-D-ribose 1-diphosphate: step 6/9. The chain is Imidazoleglycerol-phosphate dehydratase from Rhodopseudomonas palustris (strain BisB5).